Reading from the N-terminus, the 206-residue chain is Large ribosomal subunit protein eL13y (206 aa).

A disordered region spans residues 182–206; the sequence is LERTNKRHAGARAKRAADAEKEEKK. Residues 186–195 are compositionally biased toward basic residues; the sequence is NKRHAGARAK. Residues 196 to 206 are compositionally biased toward basic and acidic residues; the sequence is RAADAEKEEKK.

Belongs to the eukaryotic ribosomal protein eL13 family.

The chain is Large ribosomal subunit protein eL13y from Brassica napus (Rape).